Here is a 353-residue protein sequence, read N- to C-terminus: UPF0283 membrane protein YcjF (353 aa).

Basic and acidic residues predominate over residues 1-19 (MSEPLKPRIDFAEPLKEEP). Residues 1–35 (MSEPLKPRIDFAEPLKEEPTSAFKAQQTFSEAESR) are disordered. 3 helical membrane passes run 70-90 (MVMG…VQWT), 100-120 (VALG…GSVV), and 213-233 (ESTL…FIAW).

This sequence belongs to the UPF0283 family.

It is found in the cell inner membrane. The chain is UPF0283 membrane protein YcjF from Salmonella dublin (strain CT_02021853).